We begin with the raw amino-acid sequence, 382 residues long: Kelch domain-containing protein 3 (382 aa).

Kelch repeat units follow at residues 25–77 (RVYS…PYMR), 88–138 (TVLL…VLGK), 139–189 (IMYI…TMLG), 191–249 (HMYV…GYNG), and 251–301 (LYIF…IVGD).

Component of a CRL2(KLHDC3) complex, also named ECS(KLHDC3) complex, composed of CUL2, Elongin BC (ELOB and ELOC), RBX1 and substrate-specific adapter KLHDC3. May form oligomers as a KLHDC3-ELOB-ELOC complex; this interaction is likely autoinhibitory for the E3 ligase complex.

Its subcellular location is the cytoplasm. The protein operates within protein modification; protein ubiquitination. Functionally, substrate-recognition component of a Cul2-RING (CRL2) E3 ubiquitin-protein ligase complex of the DesCEND (destruction via C-end degrons) pathway, which recognizes a C-degron located at the extreme C terminus of target proteins, leading to their ubiquitination and degradation. The C-degron recognized by the DesCEND pathway is usually a motif of less than ten residues and can be present in full-length proteins, truncated proteins or proteolytically cleaved forms. The CRL2(KLHDC3) complex specifically recognizes proteins with a glycine (Gly) at the C-terminus, leading to their ubiquitination and degradation: recognizes the C-terminal -Arg-(Xaa)n-Arg-Gly, -Arg-(Xaa)n-Lys-Gly, and -Arg-(Xaa)n-Gln-Gly degrons. The CRL2(KLHDC3) complex mediates ubiquitination and degradation of truncated SELENOV and SEPHS2 selenoproteins produced by failed UGA/Sec decoding, which end with a glycine. May be involved in meiotic recombination process. This is Kelch domain-containing protein 3 from Homo sapiens (Human).